The sequence spans 432 residues: Phosphoprotein associated with glycosphingolipid-enriched microdomains 1 (432 aa).

At 1–16 the chain is on the extracellular side; the sequence is MGPAGSLLGSGQMQIT. Residues 17-37 traverse the membrane as a helical; Signal-anchor for type III membrane protein segment; that stretch reads LWGSLAAVAIFFVITFLIFLC. 2 S-palmitoyl cysteine lipidation sites follow: cysteine 37 and cysteine 40. Topologically, residues 38–432 are cytoplasmic; sequence SSCDREKKPR…LQQGRDITRL (395 aa). Phosphoserine occurs at positions 50 and 61. Tyrosine 105 carries the post-translational modification Phosphotyrosine; by LYN. A compositionally biased stretch (polar residues) spans 110–122; the sequence is TSASDLLDSQDST. Residues 110 to 137 are disordered; sequence TSASDLLDSQDSTGKPKCHQSRELPRIP. 3 positions are modified to phosphotyrosine: tyrosine 163, tyrosine 181, and tyrosine 227. Disordered regions lie at residues 197-230 and 244-432; these read EKGHSGKAKSTSASKELPGPQTEGKAEFAEYASV and SILG…ITRL. Residues 220 to 230 are compositionally biased toward basic and acidic residues; that stretch reads GKAEFAEYASV. A Phosphoserine modification is found at serine 229. Residues 316–356 show a composition bias toward polar residues; that stretch reads MYSSVNKPGQLVNKSGQSLTVPESTYTSIQGDPQRSPSSCN. The residue at position 317 (tyrosine 317) is a Phosphotyrosine; by FYN and LYN. Positions 317–320 are interaction with CSK; it reads YSSV. The residue at position 354 (serine 354) is a Phosphoserine. Tyrosine 359 bears the Phosphotyrosine mark. Residue serine 380 is modified to Phosphoserine. Phosphotyrosine occurs at positions 387 and 417. Residues 430 to 432 are interaction with NHERF1; sequence TRL.

In terms of assembly, interacts with FYN. When phosphorylated, interacts with CSK. Interacts with NHERF1/EBP50. In resting T-cells, part of a PAG1-NHERF1-MSN complex which is disrupted upon TCR activation. Interacts with LYN on plasma membrane lipid rafts. Identified in a complex with LYN and STAT3. In terms of processing, palmitoylated. Post-translationally, phosphorylated by FYN on Tyr-317 in resting T-cells; which promotes interaction with CSK. Dephosphorylated by PTPRC/CD45 upon TCR activation; which leads to CSK dissociation. May also be dephosphorylated by PTPN11. Hyperphosphorylated in mast cells upon FCER1 activation. Phosphorylated by LYN. Ubiquitously expressed. Present in germinal center B-cells, plasma cells, T-cells, monocytes and platelets (at protein level).

The protein resides in the cell membrane. Functionally, negatively regulates TCR (T-cell antigen receptor)-mediated signaling in T-cells and FCER1 (high affinity immunoglobulin epsilon receptor)-mediated signaling in mast cells. Promotes CSK activation and recruitment to lipid rafts, which results in LCK inhibition. Inhibits immunological synapse formation by preventing dynamic arrangement of lipid raft proteins. May be involved in cell adhesion signaling. This is Phosphoprotein associated with glycosphingolipid-enriched microdomains 1 (PAG1) from Homo sapiens (Human).